The sequence spans 313 residues: Methionyl-tRNA formyltransferase (313 aa).

S110–P113 contacts (6S)-5,6,7,8-tetrahydrofolate.

The protein belongs to the Fmt family.

It carries out the reaction L-methionyl-tRNA(fMet) + (6R)-10-formyltetrahydrofolate = N-formyl-L-methionyl-tRNA(fMet) + (6S)-5,6,7,8-tetrahydrofolate + H(+). In terms of biological role, attaches a formyl group to the free amino group of methionyl-tRNA(fMet). The formyl group appears to play a dual role in the initiator identity of N-formylmethionyl-tRNA by promoting its recognition by IF2 and preventing the misappropriation of this tRNA by the elongation apparatus. The chain is Methionyl-tRNA formyltransferase from Enterococcus faecalis (strain ATCC 700802 / V583).